Reading from the N-terminus, the 593-residue chain is Glutamate decarboxylase 1 (593 aa).

A compositionally biased stretch (low complexity) spans 1–12 (MASSTPSPATSS). Positions 1–22 (MASSTPSPATSSNAGADPNTTN) are disordered. S77 is subject to Phosphoserine. 189-191 (QLS) provides a ligand contact to 4-aminobutanoate. N6-(pyridoxal phosphate)lysine is present on K404. R566 is a binding site for 4-aminobutanoate.

This sequence belongs to the group II decarboxylase family. Homodimer. Requires pyridoxal 5'-phosphate as cofactor. In terms of tissue distribution, expressed in brain and pancreatic islets.

It catalyses the reaction L-glutamate + H(+) = 4-aminobutanoate + CO2. Functionally, catalyzes the synthesis of the inhibitory neurotransmitter gamma-aminobutyric acid (GABA) with pyridoxal 5'-phosphate as cofactor. The protein is Glutamate decarboxylase 1 (Gad1) of Rattus norvegicus (Rat).